Reading from the N-terminus, the 523-residue chain is UDP-glucuronosyltransferase 3A1 (523 aa).

The N-terminal stretch at 1-22 is a signal peptide; it reads MVGQRVLLLVAFLLSGVLLSEA. Over 23–483 the chain is Extracellular; sequence AKILTISTLG…YAFQQPWHEQ (461 aa). The N-linked (GlcNAc...) asparagine glycan is linked to Asn52. Residues 484–504 form a helical membrane-spanning segment; sequence YLIDVFVFLLGLTLGTMWLCG. Residues 505 to 523 lie on the Cytoplasmic side of the membrane; it reads KLLGVVARWLRGARKVKKT.

It belongs to the UDP-glycosyltransferase family.

The protein localises to the membrane. The enzyme catalyses glucuronate acceptor + UDP-alpha-D-glucuronate = acceptor beta-D-glucuronoside + UDP + H(+). In terms of biological role, UDP-glucuronosyltransferases catalyze phase II biotransformation reactions in which lipophilic substrates are conjugated with glucuronic acid to increase water solubility and enhance excretion. They are of major importance in the conjugation and subsequent elimination of potentially toxic xenobiotics and endogenous compounds. The chain is UDP-glucuronosyltransferase 3A1 (UGT3A1) from Homo sapiens (Human).